A 197-amino-acid chain; its full sequence is FMN-dependent NADH:quinone oxidoreductase (197 aa).

FMN is bound at residue S10.

The protein belongs to the azoreductase type 1 family. Homodimer. FMN serves as cofactor.

The catalysed reaction is 2 a quinone + NADH + H(+) = 2 a 1,4-benzosemiquinone + NAD(+). It carries out the reaction N,N-dimethyl-1,4-phenylenediamine + anthranilate + 2 NAD(+) = 2-(4-dimethylaminophenyl)diazenylbenzoate + 2 NADH + 2 H(+). Functionally, quinone reductase that provides resistance to thiol-specific stress caused by electrophilic quinones. Also exhibits azoreductase activity. Catalyzes the reductive cleavage of the azo bond in aromatic azo compounds to the corresponding amines. This Mycoplasma pneumoniae (strain ATCC 29342 / M129 / Subtype 1) (Mycoplasmoides pneumoniae) protein is FMN-dependent NADH:quinone oxidoreductase.